We begin with the raw amino-acid sequence, 339 residues long: ADP-L-glycero-D-manno-heptose-6-epimerase (339 aa).

NADP(+) contacts are provided by residues 11–12 (FI), 32–33 (DD), K39, K54, 75–79 (EGACS), and N92. Catalysis depends on Y139, which acts as the Proton acceptor. Residue K143 participates in NADP(+) binding. N170 contacts substrate. The NADP(+) site is built by V171 and K179. K179 acts as the Proton acceptor in catalysis. Residues R181, H188, 202 to 205 (FGEY), R215, and Y294 contribute to the substrate site.

This sequence belongs to the NAD(P)-dependent epimerase/dehydratase family. HldD subfamily. In terms of assembly, homopentamer. It depends on NADP(+) as a cofactor.

The catalysed reaction is ADP-D-glycero-beta-D-manno-heptose = ADP-L-glycero-beta-D-manno-heptose. It functions in the pathway nucleotide-sugar biosynthesis; ADP-L-glycero-beta-D-manno-heptose biosynthesis; ADP-L-glycero-beta-D-manno-heptose from D-glycero-beta-D-manno-heptose 7-phosphate: step 4/4. In terms of biological role, catalyzes the interconversion between ADP-D-glycero-beta-D-manno-heptose and ADP-L-glycero-beta-D-manno-heptose via an epimerization at carbon 6 of the heptose. The protein is ADP-L-glycero-D-manno-heptose-6-epimerase of Polynucleobacter necessarius subsp. necessarius (strain STIR1).